The chain runs to 451 residues: Heme sensor protein HssS (451 aa).

The next 2 helical transmembrane spans lie at 9 to 29 (IAIYAITVILFSALMSFLFTN) and 164 to 184 (IFLAVLITLLLIISISLVIAS). In terms of domain architecture, HAMP spans 186–238 (YSIIKPVTALKNATTRIMKGDFSTPIKQTRHDEIGTLQSRFNTMRQNLGQVDQ). A Histidine kinase domain is found at 246–451 (NVSHEIKTPL…KTQFIVKLFI (206 aa)). Histidine 249 is modified (phosphohistidine; by autocatalysis).

Post-translationally, autophosphorylated.

It is found in the cell membrane. The catalysed reaction is ATP + protein L-histidine = ADP + protein N-phospho-L-histidine.. Member of the two-component regulatory system HssS/HssR involved in intracellular heme homeostasis and tempering of staphylococcal virulence. HssS functions as a heme sensor histidine kinase which is autophosphorylated at a histidine residue and transfers its phosphate group to an aspartate residue of HssR. HssR/HssS activates the expression of HrtAB, an efflux pump, in response to extracellular heme, hemin, hemoglobin or blood. This chain is Heme sensor protein HssS (hssS), found in Staphylococcus epidermidis (strain ATCC 12228 / FDA PCI 1200).